Consider the following 598-residue polypeptide: Aspartate--tRNA(Asp/Asn) ligase (598 aa).

An L-aspartate-binding site is contributed by Glu-177. The segment at 201-204 is aspartate; sequence QLFK. Arg-223 is an L-aspartate binding site. ATP-binding positions include 223 to 225 and Gln-232; that span reads RDE. His-456 contacts L-aspartate. Glu-493 is an ATP binding site. Arg-500 contacts L-aspartate. Position 545–548 (545–548) interacts with ATP; that stretch reads GLDR.

This sequence belongs to the class-II aminoacyl-tRNA synthetase family. Type 1 subfamily. In terms of assembly, homodimer.

It is found in the cytoplasm. It carries out the reaction tRNA(Asx) + L-aspartate + ATP = L-aspartyl-tRNA(Asx) + AMP + diphosphate. Functionally, aspartyl-tRNA synthetase with relaxed tRNA specificity since it is able to aspartylate not only its cognate tRNA(Asp) but also tRNA(Asn). Reaction proceeds in two steps: L-aspartate is first activated by ATP to form Asp-AMP and then transferred to the acceptor end of tRNA(Asp/Asn). The sequence is that of Aspartate--tRNA(Asp/Asn) ligase from Prochlorococcus marinus (strain MIT 9301).